Consider the following 214-residue polypeptide: Large ribosomal subunit protein uL3 (214 aa).

The segment at 133–155 (ATHGNSRSHRVPGSTGQCQSPGR) is disordered. Glutamine 151 bears the N5-methylglutamine mark.

It belongs to the universal ribosomal protein uL3 family. As to quaternary structure, part of the 50S ribosomal subunit. Forms a cluster with proteins L14 and L19. In terms of processing, methylated by PrmB.

One of the primary rRNA binding proteins, it binds directly near the 3'-end of the 23S rRNA, where it nucleates assembly of the 50S subunit. This Cellvibrio japonicus (strain Ueda107) (Pseudomonas fluorescens subsp. cellulosa) protein is Large ribosomal subunit protein uL3.